A 154-amino-acid chain; its full sequence is Myoglobin (154 aa).

A Globin domain is found at 2–148 (GLSDGEWQLV…FRNDIAAKYK (147 aa)). At Ser-4 the chain carries Phosphoserine. Residue His-65 participates in nitrite binding. O2 is bound at residue His-65. A phosphothreonine mark is found at Thr-68 and Thr-75. Position 94 (His-94) interacts with heme b. Ser-121 is modified (phosphoserine).

The protein belongs to the globin family. As to quaternary structure, monomeric.

The protein localises to the cytoplasm. Its subcellular location is the sarcoplasm. It carries out the reaction Fe(III)-heme b-[protein] + nitric oxide + H2O = Fe(II)-heme b-[protein] + nitrite + 2 H(+). It catalyses the reaction H2O2 + AH2 = A + 2 H2O. In terms of biological role, monomeric heme protein which primary function is to store oxygen and facilitate its diffusion within muscle tissues. Reversibly binds oxygen through a pentacoordinated heme iron and enables its timely and efficient release as needed during periods of heightened demand. Depending on the oxidative conditions of tissues and cells, and in addition to its ability to bind oxygen, it also has a nitrite reductase activity whereby it regulates the production of bioactive nitric oxide. Under stress conditions, like hypoxia and anoxia, it also protects cells against reactive oxygen species thanks to its pseudoperoxidase activity. The sequence is that of Myoglobin from Mus musculus (Mouse).